The chain runs to 386 residues: MRLSNLIASASLLSAATLAAPANHEHKDKRAVVTTTVQKQTTIIVNGAASTPVAALEENAVVNSAPAAATSTTSSAASVATAAASSSENNSQVSAAASPASSSAATSTQSSSSSQASSSSSSGEDVSSFASGVRGITYTPYESSGACKSASEVASDLAQLTDFPVIRLYGTDCNQVENVFKAKASNQKVFLGIYYVDQIQDGVNTIKSAVESYGSWDDVTTVSIGNELVNGNQATPSQVGQYIDSGRSALKAAGYTGPVVSVDTFIAVINNPELCDYSDYMAVNAHAYFDKNTVAQDSGKWLLEQIQRVWTACDGKKNVVITESGWPSKGETYGVAVPSKENQKDAVSAITSSCGADTFLFTAFNDYWKADGAYGVEKYWGILSNE.

Positions 1-19 are cleaved as a signal peptide; that stretch reads MRLSNLIASASLLSAATLA. Positions 20 to 30 are excised as a propeptide; the sequence is APANHEHKDKR. The interval 88 to 127 is disordered; sequence ENNSQVSAAASPASSSAATSTQSSSSSQASSSSSSGEDVS. Residue N89 is glycosylated (N-linked (GlcNAc...) asparagine). E323 acts as the Nucleophile in catalysis.

Belongs to the glycosyl hydrolase 17 family. Post-translationally, N-glycosylated.

The protein localises to the secreted. It is found in the cell wall. Its function is as follows. Glucanases possibly play a role in cell expansion during growth, in cell-cell fusion during mating, and in spore release during sporulation. This Saccharomyces cerevisiae (strain ATCC 204508 / S288c) (Baker's yeast) protein is Probable family 17 glucosidase SCW4 (SCW4).